The following is a 148-amino-acid chain: MRVIVQRSQQAQVSIDGKVRGTIDHGFVLLVGFQDGDGQAELDYIAHKILNLRVFSDADGKMNLNIQQVGGAILSISQFTLYAETRHGNRPSFTAAGNPELASKLYDTFNQQLAASGVTVATGEFGADMQVSLVNDGPVTICYDTDQR.

A Gly-cisPro motif, important for rejection of L-amino acids motif is present at residues 137–138 (GP).

It belongs to the DTD family. Homodimer.

It is found in the cytoplasm. The catalysed reaction is glycyl-tRNA(Ala) + H2O = tRNA(Ala) + glycine + H(+). It catalyses the reaction a D-aminoacyl-tRNA + H2O = a tRNA + a D-alpha-amino acid + H(+). Its function is as follows. An aminoacyl-tRNA editing enzyme that deacylates mischarged D-aminoacyl-tRNAs. Also deacylates mischarged glycyl-tRNA(Ala), protecting cells against glycine mischarging by AlaRS. Acts via tRNA-based rather than protein-based catalysis; rejects L-amino acids rather than detecting D-amino acids in the active site. By recycling D-aminoacyl-tRNA to D-amino acids and free tRNA molecules, this enzyme counteracts the toxicity associated with the formation of D-aminoacyl-tRNA entities in vivo and helps enforce protein L-homochirality. The protein is D-aminoacyl-tRNA deacylase of Lactiplantibacillus plantarum (strain ATCC BAA-793 / NCIMB 8826 / WCFS1) (Lactobacillus plantarum).